An 877-amino-acid polypeptide reads, in one-letter code: Leucine--tRNA ligase (877 aa).

A 'HIGH' region motif is present at residues 43-53; sequence PYPSGRIHMGH. A 'KMSKS' region motif is present at residues 628–632; that stretch reads KMSKS. Lys631 provides a ligand contact to ATP.

The protein belongs to the class-I aminoacyl-tRNA synthetase family.

Its subcellular location is the cytoplasm. The enzyme catalyses tRNA(Leu) + L-leucine + ATP = L-leucyl-tRNA(Leu) + AMP + diphosphate. This chain is Leucine--tRNA ligase, found in Brucella abortus biovar 1 (strain 9-941).